The following is a 350-amino-acid chain: Ribosomal RNA large subunit methyltransferase Cfr (350 aa).

The active-site Proton acceptor is E92. One can recognise a Radical SAM core domain in the interval 99–333 (EAGWESFCIS…VTIRSQFGRE (235 aa)). Residues C106 and C338 are joined by a disulfide bond. [4Fe-4S] cluster contacts are provided by C113, C117, and C120. S-adenosyl-L-methionine-binding positions include 159–160 (GE), S190, 213–215 (SLH), and N293. C338 (S-methylcysteine intermediate) is an active-site residue.

This sequence belongs to the radical SAM superfamily. RlmN family. Cfr subfamily. [4Fe-4S] cluster serves as cofactor.

It localises to the cytoplasm. The enzyme catalyses adenosine(2503) in 23S rRNA + 2 reduced [2Fe-2S]-[ferredoxin] + 2 S-adenosyl-L-methionine = 8-methyladenosine(2503) in 23S rRNA + 5'-deoxyadenosine + L-methionine + 2 oxidized [2Fe-2S]-[ferredoxin] + S-adenosyl-L-homocysteine. Specifically methylates position 8 of adenine 2503 in 23S rRNA. Confers resistance to some classes of antibiotics. The sequence is that of Ribosomal RNA large subunit methyltransferase Cfr from Shouchella clausii (strain KSM-K16) (Alkalihalobacillus clausii).